A 158-amino-acid polypeptide reads, in one-letter code: Crossover junction endodeoxyribonuclease RuvC (158 aa).

Catalysis depends on residues Asp7, Glu67, and Asp139. Asp7, Glu67, and Asp139 together coordinate Mg(2+).

The protein belongs to the RuvC family. In terms of assembly, homodimer which binds Holliday junction (HJ) DNA. The HJ becomes 2-fold symmetrical on binding to RuvC with unstacked arms; it has a different conformation from HJ DNA in complex with RuvA. In the full resolvosome a probable DNA-RuvA(4)-RuvB(12)-RuvC(2) complex forms which resolves the HJ. It depends on Mg(2+) as a cofactor.

It localises to the cytoplasm. The enzyme catalyses Endonucleolytic cleavage at a junction such as a reciprocal single-stranded crossover between two homologous DNA duplexes (Holliday junction).. In terms of biological role, the RuvA-RuvB-RuvC complex processes Holliday junction (HJ) DNA during genetic recombination and DNA repair. Endonuclease that resolves HJ intermediates. Cleaves cruciform DNA by making single-stranded nicks across the HJ at symmetrical positions within the homologous arms, yielding a 5'-phosphate and a 3'-hydroxyl group; requires a central core of homology in the junction. The consensus cleavage sequence is 5'-(A/T)TT(C/G)-3'. Cleavage occurs on the 3'-side of the TT dinucleotide at the point of strand exchange. HJ branch migration catalyzed by RuvA-RuvB allows RuvC to scan DNA until it finds its consensus sequence, where it cleaves and resolves the cruciform DNA. The chain is Crossover junction endodeoxyribonuclease RuvC from Prochlorococcus marinus (strain MIT 9211).